The primary structure comprises 328 residues: Alanine racemase (328 aa).

Lys-33 (proton acceptor; specific for D-alanine) is an active-site residue. Position 33 is an N6-(pyridoxal phosphate)lysine (Lys-33). Arg-118 contributes to the substrate binding site. Tyr-237 (proton acceptor; specific for L-alanine) is an active-site residue. Position 283 (Met-283) interacts with substrate.

This sequence belongs to the alanine racemase family. Pyridoxal 5'-phosphate serves as cofactor.

The enzyme catalyses L-alanine = D-alanine. The protein operates within amino-acid biosynthesis; D-alanine biosynthesis; D-alanine from L-alanine: step 1/1. In terms of biological role, catalyzes the interconversion of L-alanine and D-alanine. May also act on other amino acids. The polypeptide is Alanine racemase (alr) (Campylobacter jejuni subsp. jejuni serotype O:23/36 (strain 81-176)).